The chain runs to 237 residues: Protein YIPF4 (237 aa).

Topologically, residues 1 to 106 (MQFSPTNGDF…FNRQVVRDNP (106 aa)) are cytoplasmic. Residues 107–127 (DFWGPLAVVLLFSMISIYGQF) form a helical membrane-spanning segment. Topologically, residues 128-131 (RVVS) are lumenal. The helical transmembrane segment at 132–152 (WIITIWIFGSLTIFLLARVLG) threads the bilayer. Residues 153-160 (GEVSYGQV) lie on the Cytoplasmic side of the membrane. Residues 161–181 (LGVIGYSLLPLIVIAPLLLVI) traverse the membrane as a helical segment. Topologically, residues 182-188 (GGFEVVS) are lumenal. The helical transmembrane segment at 189-209 (TLIKLFGVFWAAYSAASLLVG) threads the bilayer. Topologically, residues 210-216 (DEFKTKK) are cytoplasmic. Residues 217 to 237 (PLLIYPIFLLYIYFLSLYTGV) traverse the membrane as a helical segment.

Belongs to the YIP1 family.

It localises to the golgi apparatus. It is found in the cis-Golgi network membrane. Its function is as follows. Involved in the maintenance of the Golgi structure. In Danio rerio (Zebrafish), this protein is Protein YIPF4 (yipf4).